We begin with the raw amino-acid sequence, 604 residues long: Elongation factor 4 (604 aa).

A tr-type G domain is found at 7–189; that stretch reads KNIRNFCIIA…QIVTKIPAPS (183 aa). GTP contacts are provided by residues 19–24 and 136–139; these read DHGKST and NKID.

This sequence belongs to the TRAFAC class translation factor GTPase superfamily. Classic translation factor GTPase family. LepA subfamily.

It localises to the cell membrane. It catalyses the reaction GTP + H2O = GDP + phosphate + H(+). Its function is as follows. Required for accurate and efficient protein synthesis under certain stress conditions. May act as a fidelity factor of the translation reaction, by catalyzing a one-codon backward translocation of tRNAs on improperly translocated ribosomes. Back-translocation proceeds from a post-translocation (POST) complex to a pre-translocation (PRE) complex, thus giving elongation factor G a second chance to translocate the tRNAs correctly. Binds to ribosomes in a GTP-dependent manner. The protein is Elongation factor 4 of Lachnospira eligens (strain ATCC 27750 / DSM 3376 / VPI C15-48 / C15-B4) (Eubacterium eligens).